We begin with the raw amino-acid sequence, 500 residues long: tRNA nucleotidyltransferase cca1 (500 aa).

Positions 122 to 139 are flexible loop; sequence DYTNSNSSNKLVFGTPLE. The short motif at 231 to 241 is the ERhxxExxxhh motif element; that stretch reads ERIGVEVDKML.

Belongs to the tRNA nucleotidyltransferase/poly(A) polymerase family.

The catalysed reaction is a tRNA precursor + 2 CTP = a tRNA with a 3' CC end + 2 diphosphate. Its function is as follows. tRNA nucleotidyltransferase involved in the synthesis of the tRNA CCA terminus. In contrast to what is usually observed in eukaryotes for which one enzyme synthesizes the whole tRNA CCA terminus, in S.pombe, cca1 specifically adds two cytidine residues to a tRNA substrate lacking this sequence while cca2 specifically adds the terminal adenosine residue thereby completing the CCA sequence. The protein is tRNA nucleotidyltransferase cca1 of Schizosaccharomyces pombe (strain 972 / ATCC 24843) (Fission yeast).